Here is a 136-residue protein sequence, read N- to C-terminus: Gilles de la Tourette syndrome chromosomal region candidate gene 1 protein (136 aa).

The chain crosses the membrane as a helical span at residues 73-93 (AICMEVFLFLWFIAPIYACVC).

The protein resides in the membrane. This is Gilles de la Tourette syndrome chromosomal region candidate gene 1 protein (GTSCR1) from Homo sapiens (Human).